The chain runs to 239 residues: tRNA (guanine-N(7)-)-methyltransferase (239 aa).

S-adenosyl-L-methionine-binding residues include Glu-69, Glu-94, Asp-121, and Asp-144. Asp-144 is an active-site residue. Lys-148 is a binding site for substrate. The tract at residues 150-155 is interaction with RNA; the sequence is RHNKRR. Substrate-binding positions include Asp-180 and 217 to 220; that span reads TKFE.

This sequence belongs to the class I-like SAM-binding methyltransferase superfamily. TrmB family. In terms of assembly, monomer.

It catalyses the reaction guanosine(46) in tRNA + S-adenosyl-L-methionine = N(7)-methylguanosine(46) in tRNA + S-adenosyl-L-homocysteine. It functions in the pathway tRNA modification; N(7)-methylguanine-tRNA biosynthesis. Its function is as follows. Catalyzes the formation of N(7)-methylguanine at position 46 (m7G46) in tRNA. The chain is tRNA (guanine-N(7)-)-methyltransferase from Yersinia pseudotuberculosis serotype I (strain IP32953).